The chain runs to 110 residues: UPF0102 protein Abu_0255 (110 aa).

This sequence belongs to the UPF0102 family.

The sequence is that of UPF0102 protein Abu_0255 from Aliarcobacter butzleri (strain RM4018) (Arcobacter butzleri).